The chain runs to 368 residues: Probable multidrug ABC transporter permease YbhR (368 aa).

Topologically, residues 1–24 (MFHRLWTLIRKELQSLLREPQTRA) are cytoplasmic. A helical transmembrane segment spans residues 25 to 45 (ILILPVLIQVILFPFAATLEV). Topologically, residues 46–173 (TNATIAIYDE…WYNPNLDYKW (128 aa)) are periplasmic. The 238-residue stretch at 129 to 366 (AQIAANYLQQ…SAAYAMFRRK (238 aa)) folds into the ABC transmembrane type-2 domain. Residues 174–194 (FVVPSLIAMITTIGVMIVTSL) form a helical membrane-spanning segment. The Cytoplasmic segment spans residues 195-222 (SVAREREQGTLDQLLVSPLTTWQIFIGK). Residues 223–243 (AVPALIVATFQATIVLAIGIW) traverse the membrane as a helical segment. The Periplasmic portion of the chain corresponds to 244 to 253 (AYQIPFAGSL). Residues 254 to 274 (ALFYFTMVIYGLSLVGFGLLI) traverse the membrane as a helical segment. Topologically, residues 275 to 284 (SSLCSTQQQA) are cytoplasmic. Residues 285–305 (FIGVFVFMMPAILLSGYVSPV) traverse the membrane as a helical segment. Topologically, residues 306–339 (ENMPVWLQNLTWINPIRHFTDITKQIYLKDASLD) are periplasmic. Residues 340–360 (IVWNSLWPLLVITATTGSAAY) traverse the membrane as a helical segment. The Cytoplasmic segment spans residues 361-368 (AMFRRKVM).

This sequence belongs to the ABC-2 integral membrane protein family. The complex is probably composed of two ATP-binding proteins (YbhF) and two transmembrane proteins (YbhR and YbhS).

Its subcellular location is the cell inner membrane. Part of the ABC transporter complex YbhFSR that could be involved in efflux of cefoperazone. Probably involved in the translocation of the substrate across the membrane. This chain is Probable multidrug ABC transporter permease YbhR (ybhR), found in Escherichia coli O157:H7.